A 38-amino-acid polypeptide reads, in one-letter code: Large ribosomal subunit protein bL36 (38 aa).

Belongs to the bacterial ribosomal protein bL36 family.

The sequence is that of Large ribosomal subunit protein bL36 from Ectopseudomonas mendocina (strain ymp) (Pseudomonas mendocina).